The primary structure comprises 188 residues: uncharacterized protein (188 aa).

Residues 62–77 (ITGEKPLIKLNESTEK) carry the L5-specific motif motif.

It localises to the mitochondrion. This is an uncharacterized protein from Dictyostelium discoideum (Social amoeba).